A 269-amino-acid polypeptide reads, in one-letter code: Energy-coupling factor transporter ATP-binding protein EcfA1 (269 aa).

The region spanning Ile-8–Asp-242 is the ABC transporter domain. Gly-42–Ser-49 is a binding site for ATP.

It belongs to the ABC transporter superfamily. Energy-coupling factor EcfA family. As to quaternary structure, forms a stable energy-coupling factor (ECF) transporter complex composed of 2 membrane-embedded substrate-binding proteins (S component), 2 ATP-binding proteins (A component) and 2 transmembrane proteins (T component).

It is found in the cell membrane. Its function is as follows. ATP-binding (A) component of a common energy-coupling factor (ECF) ABC-transporter complex. Unlike classic ABC transporters this ECF transporter provides the energy necessary to transport a number of different substrates. In Staphylococcus aureus (strain bovine RF122 / ET3-1), this protein is Energy-coupling factor transporter ATP-binding protein EcfA1.